Consider the following 96-residue polypeptide: Large ribosomal subunit protein bL21 (96 aa).

Over residues 73–84 the composition is skewed to basic residues; that stretch reads KRRKRYQSRNGH. The disordered stretch occupies residues 73–96; sequence KRRKRYQSRNGHRQQMTQIEVVSL. Over residues 85 to 96 the composition is skewed to polar residues; it reads RQQMTQIEVVSL.

It belongs to the bacterial ribosomal protein bL21 family. In terms of assembly, part of the 50S ribosomal subunit. Contacts protein L20.

In terms of biological role, this protein binds to 23S rRNA in the presence of protein L20. The polypeptide is Large ribosomal subunit protein bL21 (Chlorobium luteolum (strain DSM 273 / BCRC 81028 / 2530) (Pelodictyon luteolum)).